We begin with the raw amino-acid sequence, 104 residues long: Large ribosomal subunit protein bL21 (104 aa).

It belongs to the bacterial ribosomal protein bL21 family. In terms of assembly, part of the 50S ribosomal subunit. Contacts protein L20.

In terms of biological role, this protein binds to 23S rRNA in the presence of protein L20. The sequence is that of Large ribosomal subunit protein bL21 from Helicobacter pylori (strain J99 / ATCC 700824) (Campylobacter pylori J99).